The chain runs to 354 residues: MGCAQSAEERAAAARSRLIERNLKEDGIQAAKDIKLLLLGAGESGKSTIVKQMKIIHESGFTAEDFKQYRPVVYSNTIQSLVAILRAMPTLSIQYSNNERESDAKMVFDVCQRMHDTEPFSEELLAAMKRLWQDAGVQECFSRSNEYQLNDSAKYFLDDLDRLGAKDYQPTEQDILRTRVKTTGIVEVHFSFKNLNFKLFDVGGQRSERKKWIHCFEDVTAIIFCVAMSEYDQVLHEDETTNRMQESLKLFDSICNNKWFTDTSIILFLNKKDLFEEKIRKSPLTICFPEYTGGQEYGEAAAYIQAQFEAKNKSTSKEIYCHMTCATDTNNIQFVFDAVTDVIIANNLRGCGLY.

Glycine 2 carries the N-myristoyl glycine lipid modification. The S-palmitoyl cysteine moiety is linked to residue cysteine 3. Positions 32–354 (KDIKLLLLGA…ANNLRGCGLY (323 aa)) constitute a G-alpha domain. Positions 35 to 48 (KLLLLGAGESGKST) are G1 motif. GTP is bound by residues 40-47 (GAGESGKS), 176-182 (LRTRVKT), 201-205 (DVGGQ), 270-273 (NKKD), and alanine 326. 2 residues coordinate Mg(2+): serine 47 and threonine 182. The G2 motif stretch occupies residues 174–182 (DILRTRVKT). The segment at 197–206 (FKLFDVGGQR) is G3 motif. Residues 266 to 273 (ILFLNKKD) form a G4 motif region. Residues 324-329 (TCATDT) form a G5 motif region.

It belongs to the G-alpha family. G(i/o/t/z) subfamily. G proteins are composed of 3 units; alpha, beta and gamma. The alpha chain contains the guanine nucleotide binding site. In terms of tissue distribution, expressed primarily in neuronal cell bodies in the brain, optic lobe, and thoracic and abdominal ganglia. Also expressed in antenna, oocytes and ovarian nurse cells.

In terms of biological role, guanine nucleotide-binding proteins (G proteins) are involved as modulators or transducers in various transmembrane signaling systems. Plays a role in glial cell differentiation during embryogenesis; loco, Galphai and the G-protein coupled receptor, moody, are required in the surface glia to achieve effective insulation of the nerve cord. This Drosophila melanogaster (Fruit fly) protein is G protein alpha o subunit (Galphao).